A 936-amino-acid chain; its full sequence is Calcium homeostasis endoplasmic reticulum protein (936 aa).

M1 carries the N-acetylmethionine modification. The stretch at 15 to 57 (VIDKLAQFVARNGPEFEKMTMEKQKDNPKFSFLFGGEFYSYYK) is one SURP motif repeat. An N6-acetyllysine modification is found at K18. A disordered region spans residues 77-102 (EPTSAMPPLPQPPLAPTASLTPAQGT). Residues 81–91 (AMPPLPQPPLA) are compositionally biased toward pro residues. The region spanning 149 to 289 (ETQLDMSEFD…QLQSPALGLG (141 aa)) is the CID domain. Positions 328 to 646 (LAQQQQQQQQ…RQGPPHINHD (319 aa)) are disordered. Positions 330 to 355 (QQQQQQQQQQQQQPQPQPQPQIQLPQ) are enriched in low complexity. Positions 363 to 383 (TPPPPAPPPASAPAPTIPPTT) are enriched in pro residues. The segment covering 395–405 (PGSSEYDTSAG) has biased composition (polar residues). Residues 488–500 (PWNNQPDPNWNNQ) are compositionally biased toward low complexity. The segment covering 534 to 550 (PFPPHQQHPQFNQPPHP) has biased composition (pro residues). Residues 551–560 (HNFNRFPPRF) are compositionally biased toward low complexity. The segment covering 561–572 (MQDDFPPRHPFE) has biased composition (basic and acidic residues). Over residues 594 to 603 (PHHHPGHRMP) the composition is skewed to basic residues. Position 723 is a phosphotyrosine (Y723). The tract at residues 731 to 887 (RARRRKGQEK…DPIKGGDVRD (157 aa)) is disordered. Residues 748-758 (SRSRSKSRGRS) show a composition bias toward basic residues. A compositionally biased stretch (low complexity) spans 759–773 (SSRSSSRSSKSSRSS). Residues 774–824 (SRSHSRSRSRSSSRSRSRSRSRSRSSRSRSRSRSRSRSKSYSPGRRRRSRS) are compositionally biased toward basic residues. Phosphoserine occurs at positions 822, 824, and 826. At T828 the chain carries Phosphothreonine. The residue at position 837 (S837) is a Phosphoserine. Residues 850–900 (EENKGHQMLVKMGWSGSGGLGAKEQGIQDPIKGGDVRDKWDQYKGVGVALD) form the G-patch domain. K853 is covalently cross-linked (Glycyl lysine isopeptide (Lys-Gly) (interchain with G-Cter in SUMO2)). Phosphoserine occurs at positions 864 and 866. Residue K881 forms a Glycyl lysine isopeptide (Lys-Gly) (interchain with G-Cter in SUMO2) linkage. K888 bears the N6-acetyllysine mark. Position 913 is a phosphoserine (S913).

Its subcellular location is the cytoplasm. The protein resides in the perinuclear region. It localises to the endoplasmic reticulum. Involved in calcium homeostasis, growth and proliferation. The sequence is that of Calcium homeostasis endoplasmic reticulum protein from Mus musculus (Mouse).